The primary structure comprises 203 residues: Shikimate kinase (203 aa).

Residue Gly-32–Ala-37 coordinates ATP. Thr-36 contacts Mg(2+). Residues Asp-54, Arg-78, and Gly-100 each contribute to the substrate site. Position 138 (Arg-138) interacts with ATP. Arg-157 contacts substrate.

It belongs to the shikimate kinase family. As to quaternary structure, monomer. Requires Mg(2+) as cofactor.

The protein localises to the cytoplasm. The enzyme catalyses shikimate + ATP = 3-phosphoshikimate + ADP + H(+). The protein operates within metabolic intermediate biosynthesis; chorismate biosynthesis; chorismate from D-erythrose 4-phosphate and phosphoenolpyruvate: step 5/7. In terms of biological role, catalyzes the specific phosphorylation of the 3-hydroxyl group of shikimic acid using ATP as a cosubstrate. This is Shikimate kinase from Mesorhizobium japonicum (strain LMG 29417 / CECT 9101 / MAFF 303099) (Mesorhizobium loti (strain MAFF 303099)).